The chain runs to 85 residues: Small ribosomal subunit protein uS17 (85 aa).

This sequence belongs to the universal ribosomal protein uS17 family. In terms of assembly, part of the 30S ribosomal subunit.

Its function is as follows. One of the primary rRNA binding proteins, it binds specifically to the 5'-end of 16S ribosomal RNA. The protein is Small ribosomal subunit protein uS17 of Rhodospirillum centenum (strain ATCC 51521 / SW).